A 155-amino-acid chain; its full sequence is UPF0735 ACT domain-containing protein CA_C1234 (155 aa).

The ACT domain occupies 79 to 154 (TISILIEHRR…NVLKVEIVAM (76 aa)).

Belongs to the UPF0735 family.

This chain is UPF0735 ACT domain-containing protein CA_C1234, found in Clostridium acetobutylicum (strain ATCC 824 / DSM 792 / JCM 1419 / IAM 19013 / LMG 5710 / NBRC 13948 / NRRL B-527 / VKM B-1787 / 2291 / W).